A 253-amino-acid chain; its full sequence is Tetraspanin-11 (253 aa).

Helical transmembrane passes span 19 to 39 (LLFI…AVGI), 63 to 83 (VLIF…GAII), 93 to 113 (YFCL…LAHV), and 220 to 240 (LLLM…GMVL).

This sequence belongs to the tetraspanin (TM4SF) family.

It localises to the membrane. This is Tetraspanin-11 (Tspan11) from Rattus norvegicus (Rat).